The chain runs to 146 residues: Large ribosomal subunit protein uL15 (146 aa).

Residues 18 to 45 (VLGRGLGCGKGKTSGRGHKGQKARSGCA) are disordered. Basic residues predominate over residues 30 to 39 (TSGRGHKGQK).

Belongs to the universal ribosomal protein uL15 family. Part of the 50S ribosomal subunit.

Binds to the 23S rRNA. In Anaplasma marginale (strain St. Maries), this protein is Large ribosomal subunit protein uL15.